The following is a 554-amino-acid chain: Inactive sesquithujene synthase (554 aa).

Mg(2+) is bound by residues Asp308 and Asp312. Asp308, Asp312, Arg449, and Asn452 together coordinate substrate. The short motif at 308-312 (DDMFD) is the DDXXD motif element. Mg(2+)-binding residues include Asn452, Ser456, and Glu460.

The protein belongs to the terpene synthase family. Monomer. The cofactor is Mg(2+). Mn(2+) serves as cofactor.

It is found in the cytoplasm. It functions in the pathway secondary metabolite biosynthesis; terpenoid biosynthesis. Non-functional sesquiterpene synthase having less than 1% of the activity found in cv. Delprim. The sequence is that of Inactive sesquithujene synthase from Zea mays (Maize).